Reading from the N-terminus, the 211-residue chain is V-type ATP synthase subunit D (211 aa).

It belongs to the V-ATPase D subunit family.

Functionally, produces ATP from ADP in the presence of a proton gradient across the membrane. This chain is V-type ATP synthase subunit D, found in Fusobacterium nucleatum subsp. nucleatum (strain ATCC 25586 / DSM 15643 / BCRC 10681 / CIP 101130 / JCM 8532 / KCTC 2640 / LMG 13131 / VPI 4355).